The following is a 332-amino-acid chain: Lipoyl synthase (332 aa).

Residues Cys-74, Cys-79, Cys-85, Cys-100, Cys-104, Cys-107, and Ser-314 each contribute to the [4Fe-4S] cluster site. In terms of domain architecture, Radical SAM core spans 85–303 (CFGKGTATFM…EEEAYKMGFT (219 aa)).

It belongs to the radical SAM superfamily. Lipoyl synthase family. Requires [4Fe-4S] cluster as cofactor.

The protein resides in the cytoplasm. It carries out the reaction [[Fe-S] cluster scaffold protein carrying a second [4Fe-4S](2+) cluster] + N(6)-octanoyl-L-lysyl-[protein] + 2 oxidized [2Fe-2S]-[ferredoxin] + 2 S-adenosyl-L-methionine + 4 H(+) = [[Fe-S] cluster scaffold protein] + N(6)-[(R)-dihydrolipoyl]-L-lysyl-[protein] + 4 Fe(3+) + 2 hydrogen sulfide + 2 5'-deoxyadenosine + 2 L-methionine + 2 reduced [2Fe-2S]-[ferredoxin]. It functions in the pathway protein modification; protein lipoylation via endogenous pathway; protein N(6)-(lipoyl)lysine from octanoyl-[acyl-carrier-protein]: step 2/2. Its function is as follows. Catalyzes the radical-mediated insertion of two sulfur atoms into the C-6 and C-8 positions of the octanoyl moiety bound to the lipoyl domains of lipoate-dependent enzymes, thereby converting the octanoylated domains into lipoylated derivatives. The chain is Lipoyl synthase from Paracidovorax citrulli (strain AAC00-1) (Acidovorax citrulli).